A 140-amino-acid chain; its full sequence is Nucleoside diphosphate kinase (140 aa).

The ATP site is built by K11, F59, R87, T93, R104, and N114. The active-site Pros-phosphohistidine intermediate is the H117.

It belongs to the NDK family. As to quaternary structure, homotetramer. Requires Mg(2+) as cofactor.

The protein localises to the cytoplasm. It catalyses the reaction a 2'-deoxyribonucleoside 5'-diphosphate + ATP = a 2'-deoxyribonucleoside 5'-triphosphate + ADP. It carries out the reaction a ribonucleoside 5'-diphosphate + ATP = a ribonucleoside 5'-triphosphate + ADP. Its function is as follows. Major role in the synthesis of nucleoside triphosphates other than ATP. The ATP gamma phosphate is transferred to the NDP beta phosphate via a ping-pong mechanism, using a phosphorylated active-site intermediate. This is Nucleoside diphosphate kinase from Francisella tularensis subsp. mediasiatica (strain FSC147).